The sequence spans 151 residues: UPF0208 membrane protein Ent638_2839 (151 aa).

2 helical membrane passes run 46-65 (YAIR…QIAL) and 69-91 (LGPA…WWLG).

The protein belongs to the UPF0208 family.

Its subcellular location is the cell inner membrane. The protein is UPF0208 membrane protein Ent638_2839 of Enterobacter sp. (strain 638).